The primary structure comprises 349 residues: Fe(3+) ions import ATP-binding protein FbpC (349 aa).

Residues 7-237 (LVLKNVTKAF…PNSLFLANFM (231 aa)) enclose the ABC transporter domain. An ATP-binding site is contributed by 39 to 46 (GPSGCGKT).

Belongs to the ABC transporter superfamily. Fe(3+) ion importer (TC 3.A.1.10) family. As to quaternary structure, the complex is composed of two ATP-binding proteins (FbpC), two transmembrane proteins (FbpB) and a solute-binding protein (FbpA).

The protein localises to the cell inner membrane. It catalyses the reaction Fe(3+)(out) + ATP + H2O = Fe(3+)(in) + ADP + phosphate + H(+). Part of the ABC transporter complex FbpABC involved in Fe(3+) ions import. Responsible for energy coupling to the transport system. This is Fe(3+) ions import ATP-binding protein FbpC from Pasteurella multocida (strain Pm70).